A 216-amino-acid polypeptide reads, in one-letter code: Ras-related protein RABA1b (216 aa).

A GTP-binding site is contributed by glycine 20–serine 27. Residues serine 42–phenylalanine 50 carry the Effector region motif. GTP contacts are provided by residues aspartate 68 to glutamine 72, asparagine 126 to aspartate 129, and serine 156 to alanine 157. Residues cysteine 213 and cysteine 214 are each lipidated (S-geranylgeranyl cysteine).

Belongs to the small GTPase superfamily. Rab family.

The protein resides in the cell membrane. Functionally, intracellular vesicle trafficking and protein transport. The protein is Ras-related protein RABA1b (RABA1B) of Arabidopsis thaliana (Mouse-ear cress).